We begin with the raw amino-acid sequence, 122 residues long: Large ribosomal subunit protein uL14 (122 aa).

It belongs to the universal ribosomal protein uL14 family. Part of the 50S ribosomal subunit. Forms a cluster with proteins L3 and L19. In the 70S ribosome, L14 and L19 interact and together make contacts with the 16S rRNA in bridges B5 and B8.

Its function is as follows. Binds to 23S rRNA. Forms part of two intersubunit bridges in the 70S ribosome. The polypeptide is Large ribosomal subunit protein uL14 (Shewanella loihica (strain ATCC BAA-1088 / PV-4)).